We begin with the raw amino-acid sequence, 430 residues long: Enolase (430 aa).

Glutamine 166 is a (2R)-2-phosphoglycerate binding site. Glutamate 208 acts as the Proton donor in catalysis. Mg(2+) is bound by residues aspartate 245, glutamate 288, and aspartate 315. Residues lysine 340, arginine 369, serine 370, and lysine 391 each contribute to the (2R)-2-phosphoglycerate site. The active-site Proton acceptor is lysine 340.

This sequence belongs to the enolase family. Mg(2+) is required as a cofactor.

The protein resides in the cytoplasm. Its subcellular location is the secreted. It localises to the cell surface. The catalysed reaction is (2R)-2-phosphoglycerate = phosphoenolpyruvate + H2O. It participates in carbohydrate degradation; glycolysis; pyruvate from D-glyceraldehyde 3-phosphate: step 4/5. In terms of biological role, catalyzes the reversible conversion of 2-phosphoglycerate (2-PG) into phosphoenolpyruvate (PEP). It is essential for the degradation of carbohydrates via glycolysis. The protein is Enolase of Clostridium kluyveri (strain NBRC 12016).